The sequence spans 170 residues: Cyclic pyranopterin monophosphate synthase (170 aa).

Substrate contacts are provided by residues 75-77 and 113-114; these read LCH and ME. Residue aspartate 128 is part of the active site.

The protein belongs to the MoaC family. Homohexamer; trimer of dimers.

The catalysed reaction is (8S)-3',8-cyclo-7,8-dihydroguanosine 5'-triphosphate = cyclic pyranopterin phosphate + diphosphate. The protein operates within cofactor biosynthesis; molybdopterin biosynthesis. Functionally, catalyzes the conversion of (8S)-3',8-cyclo-7,8-dihydroguanosine 5'-triphosphate to cyclic pyranopterin monophosphate (cPMP). The polypeptide is Cyclic pyranopterin monophosphate synthase (Pelotomaculum thermopropionicum (strain DSM 13744 / JCM 10971 / SI)).